The following is a 905-amino-acid chain: Nitrate reductase [NADPH] (905 aa).

Residues 1-42 (METSTTTTLLQQERIPENSEPISTHIHTHSLPPTPPGTAKPS) form a disordered region. Position 179 (C179) interacts with Mo-molybdopterin. The Cytochrome b5 heme-binding domain occupies 546–621 (NRKITIEELK…LPTYHIGTLD (76 aa)). Residues H581 and H604 each contribute to the heme site. The FAD-binding FR-type domain maps to 648 to 759 (KTWSKAILDK…KGPTGKFVYH (112 aa)). FAD-binding positions include 702 to 705 (RSYT), 719 to 723 (LIKIY), 733 to 735 (VMT), S783, and T786. 875-884 (LLLVCGPPPM) contributes to the NADP(+) binding site.

It belongs to the nitrate reductase family. Homodimer. FAD is required as a cofactor. Heme serves as cofactor. It depends on Mo-molybdopterin as a cofactor.

It carries out the reaction nitrite + NADP(+) + H2O = nitrate + NADPH + H(+). Nitrate reductase is a key enzyme involved in the first step of nitrate assimilation in plants, fungi and bacteria. This Fusarium oxysporum (Fusarium vascular wilt) protein is Nitrate reductase [NADPH] (NIA).